The chain runs to 240 residues: Uridylate kinase (240 aa).

12–15 (KLSG) lines the ATP pocket. Residues 20 to 25 (GEQGFG) form an involved in allosteric activation by GTP region. G54 lines the UMP pocket. G55 and R59 together coordinate ATP. UMP is bound by residues D74 and 135 to 142 (TGNPYFST). Residues N163, Y169, and D172 each coordinate ATP.

The protein belongs to the UMP kinase family. Homohexamer.

Its subcellular location is the cytoplasm. The enzyme catalyses UMP + ATP = UDP + ADP. The protein operates within pyrimidine metabolism; CTP biosynthesis via de novo pathway; UDP from UMP (UMPK route): step 1/1. Allosterically activated by GTP. Inhibited by UTP. Functionally, catalyzes the reversible phosphorylation of UMP to UDP. In Bacillus cereus (strain ATCC 14579 / DSM 31 / CCUG 7414 / JCM 2152 / NBRC 15305 / NCIMB 9373 / NCTC 2599 / NRRL B-3711), this protein is Uridylate kinase.